A 447-amino-acid polypeptide reads, in one-letter code: Nuclear envelope integral membrane protein 2 (447 aa).

An N-terminal signal peptide occupies residues 1-28; sequence MGPRRLPWARPGPALGLLLLALAGAVPA. The next 5 helical transmembrane spans lie at 144 to 164, 173 to 193, 202 to 222, 235 to 255, and 275 to 295; these read EMLD…FHFA, FFYL…VLLA, STFW…IYCF, IYVL…CYQH, and AFVF…IIAV. Residues 410–438 are disordered; the sequence is TRTESEQDETTSYIHEGDDENEDEIHEPI.

It belongs to the NEMP family.

It is found in the nucleus inner membrane. In Gallus gallus (Chicken), this protein is Nuclear envelope integral membrane protein 2 (NEMP2).